Reading from the N-terminus, the 296-residue chain is 33 kDa chaperonin (296 aa).

Intrachain disulfides connect cysteine 236/cysteine 238 and cysteine 269/cysteine 272.

The protein belongs to the HSP33 family. Under oxidizing conditions two disulfide bonds are formed involving the reactive cysteines. Under reducing conditions zinc is bound to the reactive cysteines and the protein is inactive.

It localises to the cytoplasm. Its function is as follows. Redox regulated molecular chaperone. Protects both thermally unfolding and oxidatively damaged proteins from irreversible aggregation. Plays an important role in the bacterial defense system toward oxidative stress. This chain is 33 kDa chaperonin, found in Lactobacillus acidophilus (strain ATCC 700396 / NCK56 / N2 / NCFM).